The sequence spans 63 residues: Metallothionein-2 (63 aa).

It belongs to the metallothionein superfamily. Type 6 family.

Its function is as follows. This protein binds cations of several transition elements. In Caenorhabditis elegans, this protein is Metallothionein-2 (mtl-2).